A 246-amino-acid polypeptide reads, in one-letter code: Exosome complex component Rrp41 (246 aa).

Belongs to the RNase PH family. Rrp41 subfamily. In terms of assembly, component of the archaeal exosome complex. Forms a hexameric ring-like arrangement composed of 3 Rrp41-Rrp42 heterodimers. The hexameric ring associates with a trimer of Rrp4 and/or Csl4 subunits.

The protein localises to the cytoplasm. Its function is as follows. Catalytic component of the exosome, which is a complex involved in RNA degradation. Has 3'-&gt;5' exoribonuclease activity. Can also synthesize heteromeric RNA-tails. In Pyrobaculum neutrophilum (strain DSM 2338 / JCM 9278 / NBRC 100436 / V24Sta) (Thermoproteus neutrophilus), this protein is Exosome complex component Rrp41.